The chain runs to 316 residues: MSNKLSQLKEFTTIVADTGDITAIKDFLPQDATTNPSLMLKAAQIPEYAPFLDQAVAWAKTQSNDKDQQVLDAGDKLAVIVGTEILKYVPGRISTEVDARLSFDKEATLAKARKLIALYEEAGVSRDRVLIKAASTWEGIKAAEELEKEGINCNLTLLFSFAQAQACAEAGVYLISPFVGRILDWYKKSTGQEYTAETDPGVVSVTEIYNYYKQHGYQTVVMGASFRNIGEIEQLAGCDRLTISPNLLEELKKDEGKLERKLLPTTDVKAAPAAITEAAFRWAMNEDAMATEKLSEGIRNFAADQRKLEETLRSML.

Lys132 serves as the catalytic Schiff-base intermediate with substrate.

This sequence belongs to the transaldolase family. Type 1 subfamily. In terms of assembly, homodimer.

Its subcellular location is the cytoplasm. It carries out the reaction D-sedoheptulose 7-phosphate + D-glyceraldehyde 3-phosphate = D-erythrose 4-phosphate + beta-D-fructose 6-phosphate. Its pathway is carbohydrate degradation; pentose phosphate pathway; D-glyceraldehyde 3-phosphate and beta-D-fructose 6-phosphate from D-ribose 5-phosphate and D-xylulose 5-phosphate (non-oxidative stage): step 2/3. Transaldolase is important for the balance of metabolites in the pentose-phosphate pathway. The chain is Transaldolase from Marinomonas sp. (strain MWYL1).